We begin with the raw amino-acid sequence, 360 residues long: Aminomethyltransferase (360 aa).

This sequence belongs to the GcvT family. As to quaternary structure, the glycine cleavage system is composed of four proteins: P, T, L and H.

It catalyses the reaction N(6)-[(R)-S(8)-aminomethyldihydrolipoyl]-L-lysyl-[protein] + (6S)-5,6,7,8-tetrahydrofolate = N(6)-[(R)-dihydrolipoyl]-L-lysyl-[protein] + (6R)-5,10-methylene-5,6,7,8-tetrahydrofolate + NH4(+). The glycine cleavage system catalyzes the degradation of glycine. In Pseudomonas syringae pv. tomato (strain ATCC BAA-871 / DC3000), this protein is Aminomethyltransferase.